A 716-amino-acid chain; its full sequence is Fatty acid oxidation complex subunit alpha (716 aa).

Residues 1-189 are enoyl-CoA hydratase/isomerase; it reads MIYQSPTIQV…KVGAVDAVVA (189 aa). D296 is a binding site for substrate. Residues 311–716 form a 3-hydroxyacyl-CoA dehydrogenase region; it reads KEVNNAAVLG…AANNGSYYQA (406 aa). NAD(+) is bound by residues M324, D343, 400-402, K407, and S429; that span reads VVE. The For 3-hydroxyacyl-CoA dehydrogenase activity role is filled by H450. N453 is a binding site for NAD(+). Substrate is bound by residues N500 and Y660.

This sequence in the N-terminal section; belongs to the enoyl-CoA hydratase/isomerase family. The protein in the C-terminal section; belongs to the 3-hydroxyacyl-CoA dehydrogenase family. As to quaternary structure, heterotetramer of two alpha chains (FadB) and two beta chains (FadA).

It carries out the reaction a (3S)-3-hydroxyacyl-CoA + NAD(+) = a 3-oxoacyl-CoA + NADH + H(+). The catalysed reaction is a (3S)-3-hydroxyacyl-CoA = a (2E)-enoyl-CoA + H2O. The enzyme catalyses a 4-saturated-(3S)-3-hydroxyacyl-CoA = a (3E)-enoyl-CoA + H2O. It catalyses the reaction (3S)-3-hydroxybutanoyl-CoA = (3R)-3-hydroxybutanoyl-CoA. It carries out the reaction a (3Z)-enoyl-CoA = a 4-saturated (2E)-enoyl-CoA. The catalysed reaction is a (3E)-enoyl-CoA = a 4-saturated (2E)-enoyl-CoA. It participates in lipid metabolism; fatty acid beta-oxidation. Involved in the aerobic and anaerobic degradation of long-chain fatty acids via beta-oxidation cycle. Catalyzes the formation of 3-oxoacyl-CoA from enoyl-CoA via L-3-hydroxyacyl-CoA. It can also use D-3-hydroxyacyl-CoA and cis-3-enoyl-CoA as substrate. The chain is Fatty acid oxidation complex subunit alpha from Shewanella baltica (strain OS195).